The sequence spans 576 residues: Deformed epidermal autoregulatory factor 1 (576 aa).

Disordered stretches follow at residues 52–76 (VTSS…GGGN), 189–215 (AGGA…NPST), and 309–362 (ESAS…SGSG). Gly residues-rich tracts occupy residues 61–76 (GSGG…GGGN) and 191–207 (GASG…GGSS). The SAND domain occupies 210 to 291 (SENPSTQHNE…QSLIDEGTLT (82 aa)). The short motif at 324–340 (RKRNQTDLDMESGPKRK) is the Nuclear localization signal element. Residues 345–362 (HSNNNNSNTNNNNTSGSG) show a composition bias toward low complexity. Cysteine 521, cysteine 524, cysteine 532, cysteine 535, cysteine 541, cysteine 545, histidine 553, and cysteine 557 together coordinate Zn(2+). Residues 521-557 (CANCNREALAECSLCRKTPYCSEFCQRKDWNAHQVEC) form an MYND-type zinc finger.

Its subcellular location is the nucleus. Functionally, transcription factor that binds the homeotic Deformed (Dfd) response element. High affinity binding sites contain at least 1 TTCG motif surrounded by additional TCG sequences. May be involved in the selective action of Dfd on these sites without binding directly to the Dfd protein. Requirement of DEAF1 activity may be a common feature of enhancers targeted by Dfd. In Drosophila melanogaster (Fruit fly), this protein is Deformed epidermal autoregulatory factor 1 (Deaf1).